Reading from the N-terminus, the 119-residue chain is Large ribosomal subunit protein uL14 (119 aa).

The protein belongs to the universal ribosomal protein uL14 family. As to quaternary structure, part of the 50S ribosomal subunit. Forms a cluster with proteins L3 and L19. In the 70S ribosome, L14 and L19 interact and together make contacts with the 16S rRNA in bridges B5 and B8.

Its function is as follows. Binds to 23S rRNA. Forms part of two intersubunit bridges in the 70S ribosome. This chain is Large ribosomal subunit protein uL14, found in Wolbachia pipientis subsp. Culex pipiens (strain wPip).